Reading from the N-terminus, the 173-residue chain is Transcription factor HES-2 (173 aa).

The bHLH domain occupies 13 to 70 (LRKSLKPLLEKRRRARINQSLSQLKGLILPLLGRENSNCSKLEKADVLEMTVRFLQEL). Positions 86–119 (YREGYSACVARLARVLPACRVLEPAVSARLLEHL) constitute an Orange domain. The interval 128-173 (LDGGRAGDSSGPSAPAPAPASAPEPASAPVPSPPSPPCGPGLWRPW) is disordered. Over residues 141 to 166 (APAPAPASAPEPASAPVPSPPSPPCG) the composition is skewed to pro residues. The WRPW motif motif lies at 170–173 (WRPW).

In terms of assembly, transcription repression requires formation of a complex with a corepressor protein of the Groucho/TLE family. Expressed in placenta, pancreatic cancer, colon cancer with RER, cervical cancer, and in head and neck tumors.

The protein resides in the nucleus. Functionally, transcriptional repressor of genes that require a bHLH protein for their transcription. This is Transcription factor HES-2 (HES2) from Homo sapiens (Human).